We begin with the raw amino-acid sequence, 291 residues long: Phosphate import ATP-binding protein PstB (291 aa).

Positions 45–286 constitute an ABC transporter domain; that stretch reads YSTQNLDLWY…PADKQTEDYI (242 aa). ATP is bound at residue 77 to 84; the sequence is GPSGCGKS.

The protein belongs to the ABC transporter superfamily. Phosphate importer (TC 3.A.1.7) family. In terms of assembly, the complex is composed of two ATP-binding proteins (PstB), two transmembrane proteins (PstC and PstA) and a solute-binding protein (PstS).

Its subcellular location is the cell membrane. It catalyses the reaction phosphate(out) + ATP + H2O = ADP + 2 phosphate(in) + H(+). Functionally, part of the ABC transporter complex PstSACB involved in phosphate import. Responsible for energy coupling to the transport system. The polypeptide is Phosphate import ATP-binding protein PstB (Staphylococcus epidermidis (strain ATCC 35984 / DSM 28319 / BCRC 17069 / CCUG 31568 / BM 3577 / RP62A)).